The following is a 107-amino-acid chain: uncharacterized protein (107 aa).

3 helical membrane passes run 16–36, 47–67, and 85–105; these read VIPC…SESL, IISL…HSLV, and LIVL…TSLI.

It localises to the membrane. This is an uncharacterized protein from Saccharomyces cerevisiae (strain ATCC 204508 / S288c) (Baker's yeast).